Here is a 34-residue protein sequence, read N- to C-terminus: Cytochrome b6-f complex subunit 8 (34 aa).

A helical transmembrane segment spans residues Ile-3–Val-23.

This sequence belongs to the PetN family. The 4 large subunits of the cytochrome b6-f complex are cytochrome b6, subunit IV (17 kDa polypeptide, PetD), cytochrome f and the Rieske protein, while the 4 small subunits are PetG, PetL, PetM and PetN. The complex functions as a dimer.

The protein resides in the cellular thylakoid membrane. Its function is as follows. Component of the cytochrome b6-f complex, which mediates electron transfer between photosystem II (PSII) and photosystem I (PSI), cyclic electron flow around PSI, and state transitions. The polypeptide is Cytochrome b6-f complex subunit 8 (Prochlorococcus marinus subsp. pastoris (strain CCMP1986 / NIES-2087 / MED4)).